Reading from the N-terminus, the 239-residue chain is Major centromere autoantigen B (239 aa).

The interval 28-185 (AGFGGGPNAT…DDEVPVPSFG (158 aa)) is disordered. Phosphothreonine occurs at positions 37 and 39. 2 stretches are compositionally biased toward acidic residues: residues 46-117 (GEEE…EAED) and 148-179 (GEED…DDEV). Residues 176 to 239 (DDEVPVPSFG…AGARGLGHQS (64 aa)) are homodimerization.

Antiparallel homodimer. Interacts with CENPT. Identified in a centromere complex containing histones H2A, H2B and H4, and at least CENPA, CENPB, CENPC, CENPT, CENPN, HJURP, SUPT16H, SSRP1 and RSF1. In terms of processing, poly-ADP-ribosylated by PARP1. N-terminally methylated by METTL11A/NTM1. Alpha-N-methylation is stimulated in response extracellular stimuli, including increased cell density and heat shock, and seems to facilitate binding to CENP-B boxes. Chromatin-bound CENP-B is primarily trimethylated.

It localises to the nucleus. It is found in the chromosome. The protein resides in the centromere. In terms of biological role, interacts with centromeric heterochromatin in chromosomes and binds to a specific 17 bp subset of alphoid satellite DNA, called the CENP-B box. May organize arrays of centromere satellite DNA into a higher-order structure which then directs centromere formation and kinetochore assembly in mammalian chromosomes. The chain is Major centromere autoantigen B (CENPB) from Ovis aries (Sheep).